Reading from the N-terminus, the 228-residue chain is Urease accessory protein UreF 1 (228 aa).

This sequence belongs to the UreF family. As to quaternary structure, ureD, UreF and UreG form a complex that acts as a GTP-hydrolysis-dependent molecular chaperone, activating the urease apoprotein by helping to assemble the nickel containing metallocenter of UreC. The UreE protein probably delivers the nickel.

It is found in the cytoplasm. In terms of biological role, required for maturation of urease via the functional incorporation of the urease nickel metallocenter. This is Urease accessory protein UreF 1 from Brucella anthropi (strain ATCC 49188 / DSM 6882 / CCUG 24695 / JCM 21032 / LMG 3331 / NBRC 15819 / NCTC 12168 / Alc 37) (Ochrobactrum anthropi).